Consider the following 375-residue polypeptide: Chaperone protein DnaJ (375 aa).

The J domain maps to 5-70; that stretch reads DYYDVLGVNR…QKRGAYDQFG (66 aa). A CR-type zinc finger spans residues 135-213; sequence GCEKQIRIPS…CHGAGQKKTT (79 aa). Zn(2+) is bound by residues C148, C151, C165, C168, C187, C190, C201, and C204. CXXCXGXG motif repeat units follow at residues 148-155, 165-172, 187-194, and 201-208; these read CSTCNGTG, CATCGGHG, CPTCHGTG, and CGSCHGAG.

It belongs to the DnaJ family. As to quaternary structure, homodimer. Zn(2+) is required as a cofactor.

It is found in the cytoplasm. In terms of biological role, participates actively in the response to hyperosmotic and heat shock by preventing the aggregation of stress-denatured proteins and by disaggregating proteins, also in an autonomous, DnaK-independent fashion. Unfolded proteins bind initially to DnaJ; upon interaction with the DnaJ-bound protein, DnaK hydrolyzes its bound ATP, resulting in the formation of a stable complex. GrpE releases ADP from DnaK; ATP binding to DnaK triggers the release of the substrate protein, thus completing the reaction cycle. Several rounds of ATP-dependent interactions between DnaJ, DnaK and GrpE are required for fully efficient folding. Also involved, together with DnaK and GrpE, in the DNA replication of plasmids through activation of initiation proteins. The protein is Chaperone protein DnaJ of Chromobacterium violaceum (strain ATCC 12472 / DSM 30191 / JCM 1249 / CCUG 213 / NBRC 12614 / NCIMB 9131 / NCTC 9757 / MK).